A 231-amino-acid chain; its full sequence is uncharacterized protein (231 aa).

10 to 34 (IITGASSGIGAATAKALEKQGVKVV) is a binding site for NADP(+). Ser-140 contacts substrate. Tyr-153 acts as the Proton acceptor in catalysis.

Belongs to the short-chain dehydrogenases/reductases (SDR) family.

This is an uncharacterized protein from Staphylococcus haemolyticus (strain JCSC1435).